The chain runs to 193 residues: Ribosomal RNA small subunit methyltransferase G (193 aa).

Residues Gly-72, Phe-77, 123 to 124 (IE), and Arg-137 contribute to the S-adenosyl-L-methionine site.

Belongs to the methyltransferase superfamily. RNA methyltransferase RsmG family.

It is found in the cytoplasm. The catalysed reaction is guanosine(527) in 16S rRNA + S-adenosyl-L-methionine = N(7)-methylguanosine(527) in 16S rRNA + S-adenosyl-L-homocysteine. Functionally, specifically methylates the N7 position of guanine in position 527 of 16S rRNA. In Wolinella succinogenes (strain ATCC 29543 / DSM 1740 / CCUG 13145 / JCM 31913 / LMG 7466 / NCTC 11488 / FDC 602W) (Vibrio succinogenes), this protein is Ribosomal RNA small subunit methyltransferase G.